A 222-amino-acid chain; its full sequence is Ribosomal RNA small subunit methyltransferase G (222 aa).

S-adenosyl-L-methionine contacts are provided by residues G84, F89, 141–142 (VE), and R154.

This sequence belongs to the methyltransferase superfamily. RNA methyltransferase RsmG family.

It localises to the cytoplasm. It catalyses the reaction guanosine(527) in 16S rRNA + S-adenosyl-L-methionine = N(7)-methylguanosine(527) in 16S rRNA + S-adenosyl-L-homocysteine. Its function is as follows. Specifically methylates the N7 position of guanine in position 527 of 16S rRNA. This is Ribosomal RNA small subunit methyltransferase G from Bradyrhizobium sp. (strain BTAi1 / ATCC BAA-1182).